A 592-amino-acid polypeptide reads, in one-letter code: Bifunctional purine biosynthesis protein ATIC (592 aa).

Met1 is subject to N-acetylmethionine. An MGS-like domain is found at Met1–Cys146. The interval Met1 to Ser198 is IMP cyclohydrolase. Residues Ser12–Lys14, Ser34–Thr37, Arg64–Thr67, Cys101–Asn102, and Asp125–Ile126 each bind IMP. The Proton donor/acceptor; for FAICAR cyclization activity role is filled by Lys137. Lys199 carries the N6-acetyllysine modification. Residues Lys199–His592 are AICAR formyltransferase. Residues Arg207 to Tyr208, His267, Gly316, Asp339, Asn431, and Arg451 each bind 5-amino-1-(5-phospho-beta-D-ribosyl)imidazole-4-carboxamide. His267 acts as the Proton acceptor; for AICAR formyltransferase activity in catalysis. A (6R)-10-formyltetrahydrofolate-binding site is contributed by Ile452. Position 541 (Phe541) interacts with 5-amino-1-(5-phospho-beta-D-ribosyl)imidazole-4-carboxamide. Residues Asp546 and Ser565–Thr566 each bind (6R)-10-formyltetrahydrofolate. Arg588 contributes to the 5-amino-1-(5-phospho-beta-D-ribosyl)imidazole-4-carboxamide binding site.

It belongs to the PurH family. As to quaternary structure, homodimer. Associates with internalized INSR complexes on Golgi/endosomal membranes. Interacts with INSR; ATIC together with PRKAA2/AMPK2 and HACD3/PTPLAD1 is proposed to be part of a signaling network regulating INSR autophosphorylation and endocytosis. In terms of tissue distribution, expressed in liver.

The protein resides in the cytoplasm. It localises to the cytosol. The catalysed reaction is (6R)-10-formyltetrahydrofolate + 5-amino-1-(5-phospho-beta-D-ribosyl)imidazole-4-carboxamide = 5-formamido-1-(5-phospho-D-ribosyl)imidazole-4-carboxamide + (6S)-5,6,7,8-tetrahydrofolate. It catalyses the reaction 10-formyldihydrofolate + 5-amino-1-(5-phospho-beta-D-ribosyl)imidazole-4-carboxamide = 5-formamido-1-(5-phospho-D-ribosyl)imidazole-4-carboxamide + 7,8-dihydrofolate. It carries out the reaction IMP + H2O = 5-formamido-1-(5-phospho-D-ribosyl)imidazole-4-carboxamide. It functions in the pathway purine metabolism; IMP biosynthesis via de novo pathway; 5-formamido-1-(5-phospho-D-ribosyl)imidazole-4-carboxamide from 5-amino-1-(5-phospho-D-ribosyl)imidazole-4-carboxamide (10-formyl THF route): step 1/1. The protein operates within purine metabolism; IMP biosynthesis via de novo pathway; IMP from 5-formamido-1-(5-phospho-D-ribosyl)imidazole-4-carboxamide: step 1/1. Its activity is regulated as follows. AMP and XMP inhibit AICAR formyltransferase activity. Its function is as follows. Bifunctional enzyme that catalyzes the last two steps of purine biosynthesis. Acts as a transformylase that incorporates a formyl group to the AMP analog AICAR (5-amino-1-(5-phospho-beta-D-ribosyl)imidazole-4-carboxamide) to produce the intermediate formyl-AICAR (FAICAR). Can use both 10-formyldihydrofolate and 10-formyltetrahydrofolate as the formyl donor in this reaction. Also catalyzes the cyclization of FAICAR to inosine monophosphate (IMP). Promotes insulin receptor/INSR autophosphorylation and is involved in INSR internalization. This Rattus norvegicus (Rat) protein is Bifunctional purine biosynthesis protein ATIC (Atic).